The sequence spans 488 residues: Spermatogenesis-associated protein 6 (488 aa).

A signal peptide spans 1 to 17 (MPKVKALQCALALEIRS). Residues 176 to 225 (HGRLQCRTSRSQKKKSKSPERSKYCINTKNYEQPTISSKSHSPSPYTKRR) form a disordered region. Residues 200-220 (CINTKNYEQPTISSKSHSPSP) show a composition bias toward polar residues. Phosphoserine occurs at positions 217 and 219. Lys-248 participates in a covalent cross-link: Glycyl lysine isopeptide (Lys-Gly) (interchain with G-Cter in SUMO2). Ser-265, Ser-274, Ser-325, Ser-343, Ser-346, Ser-354, Ser-424, Ser-465, and Ser-487 each carry phosphoserine.

This sequence belongs to the SPATA6 family. Interacts with MYL6. Specifically expressed in developing spermatids and mature spermatozoa (at protein level). Isoform 1 is weakly expressed in testis, ovary, thymus and placenta. Isoform 2 and isoform 3 are testis-specific. Expression isw higher in spermatids than in spermatocytes and spermatogonia.

It is found in the secreted. Its subcellular location is the cell projection. The protein resides in the cilium. The protein localises to the flagellum. Its function is as follows. Required for formation of the sperm connecting piece during spermiogenesis. Sperm connecting piece is essential for linking the developing flagellum to the head during late spermiogenesis. May be involved in myosin-based microfilament transport through interaction with myosin subunits. This is Spermatogenesis-associated protein 6 from Mus musculus (Mouse).